A 797-amino-acid chain; its full sequence is MKLNQFARLTPDFKVQVAELKQIGLQADPDDTFSQSTTDLFNAFFPEAYTLAAKKDKLAQVAVNMDQTLAAWLAKKPSKMTRRDFYNVALQLLGFEAFTDFDLNDPFKMMTATKLPSLDHDLTSTADLLKAVYLLLNTRTKHLVSYLDDLANRGFLKDFQKKQKKPTHLLFNGKVQQVFDARQAVREVVWIESDMDTDHDGQRDLLEATIYRPKATDQGLKVPVLFTANPYFHGTNDVTAVTHVPETTLAVKTHGASKAEVTANPEEPANLPHHPVNGEATQAEAYAEENGMYAFNDYFLARGFAVVYSAGVGTRYSDGFRTTGGPEETDGAVAVIEWLTGKRRAFTNRTDGITIKAWWSTGLVAMTGKSYLATLAMAAATTGVDGLKTIVADAGISSWYDYYRENGLVVAPGGFQGEDADVLAVDTFSRQKSGGDLINIKQAWEKHLATITHDQDRTTGAYNTWWDARNYRKNANKVKADVVLIHGLNDWNVKPTNAIKFWEAIADLPIQKKLVLHQGQHVYVHNVRSLDFLDMMNLWLTHELLGEANGAEDVLPNVVVQDNVAVQTWSAYQNFASPAAEHVTNTRNLKTDFEAATDQFTDHATATFDAQHDTSASFETAIITPNSAYANSRLWLTQPPLERDQTLEGIPHLELTLAIDAPTGILSVRLIDLGMAKRFGETAATVALNGLQLGFDYKTTDILEFKPTAKPTPSKLISLGHINLQNPKNAYEVQRITPGQPFHISLDLQPTHYHLPAGRQLALVIHGADMAQTIRPIKTTHYQIDLANSSITLPYRI.

Active-site charge relay system residues include Ser-370, Asp-490, and His-521.

Belongs to the peptidase S15 family. Homodimer.

It localises to the cytoplasm. The catalysed reaction is Hydrolyzes Xaa-Pro-|- bonds to release unblocked, N-terminal dipeptides from substrates including Ala-Pro-|-p-nitroanilide and (sequentially) Tyr-Pro-|-Phe-Pro-|-Gly-Pro-|-Ile.. Functionally, removes N-terminal dipeptides sequentially from polypeptides having unsubstituted N-termini provided that the penultimate residue is proline. This chain is Xaa-Pro dipeptidyl-peptidase, found in Lacticaseibacillus paracasei (strain ATCC 334 / BCRC 17002 / CCUG 31169 / CIP 107868 / KCTC 3260 / NRRL B-441) (Lactobacillus paracasei).